The following is a 71-amino-acid chain: Large ribosomal subunit protein bL31 (71 aa).

Residues C16, C18, C36, and C39 each coordinate Zn(2+).

The protein belongs to the bacterial ribosomal protein bL31 family. Type A subfamily. In terms of assembly, part of the 50S ribosomal subunit. The cofactor is Zn(2+).

In terms of biological role, binds the 23S rRNA. This is Large ribosomal subunit protein bL31 from Thermotoga maritima (strain ATCC 43589 / DSM 3109 / JCM 10099 / NBRC 100826 / MSB8).